We begin with the raw amino-acid sequence, 234 residues long: MGAQWKVKHKEAAANAKGRTFGKLSKEIMIAARAGADPDMNSRLRLVVEQAKKASMPRETLERAIKKGAGLLGESVNFERLTYEGFAPHRVPVIVECLTDNINRTVSEIRVLFRKGQLGAAGSVSWDFLYQGMIEAVPAAADADPELAAIEAGAQDFEPGEEGATLFLTESTDMDAVCKALPEFGFTVQSAQLGYRPKSTVDGLTDEQMAEVEAFLEAIDNHDDVQNVYVGLAG.

The protein belongs to the TACO1 family.

The protein localises to the cytoplasm. This Pseudomonas syringae pv. syringae (strain B728a) protein is Probable transcriptional regulatory protein Psyr_3028.